A 146-amino-acid chain; its full sequence is Large ribosomal subunit protein uL16 (146 aa).

It belongs to the universal ribosomal protein uL16 family. As to quaternary structure, part of the 50S ribosomal subunit.

Binds 23S rRNA and is also seen to make contacts with the A and possibly P site tRNAs. The polypeptide is Large ribosomal subunit protein uL16 (Lactobacillus acidophilus (strain ATCC 700396 / NCK56 / N2 / NCFM)).